The chain runs to 272 residues: Zinc finger protein 32 (272 aa).

Residues 50–65 show a composition bias toward basic and acidic residues; it reads RREKLEQKSPESKALQ. The tract at residues 50–69 is disordered; that stretch reads RREKLEQKSPESKALQEDSP. C2H2-type zinc fingers lie at residues 76–98, 104–126, and 132–154; these read YDCQ…ERIH, FECT…QRIH, and YQCK…ERLH. Residues Cys-78, Cys-81, His-94, His-98, Cys-106, Cys-109, His-122, His-126, Ser-140, Gln-143, Gly-156, Tyr-160, Phe-197, Lys-200, Leu-213, Ala-217, Cys-246, Cys-249, His-262, and Cys-266 each contribute to the Zn(2+) site. 2 C2H2-type zinc fingers span residues 160 to 182 and 188 to 210; these read YECA…RRVH and YRCD…IRVH. The C2H2-type 6 zinc-finger motif lies at 216-238; the sequence is YACSHCRKSFHTRGNCLLHGKVH. The CCHC-type zinc-finger motif lies at 244–266; it reads YLCGQCGKSFTQRGSLAVHQRSC.

Belongs to the krueppel C2H2-type zinc-finger protein family.

It is found in the nucleus. In terms of biological role, may be involved in transcriptional regulation. The chain is Zinc finger protein 32 (Znf32) from Mus musculus (Mouse).